The following is a 454-amino-acid chain: Bifunctional protein GlmU (454 aa).

The interval 1–226 is pyrophosphorylase; that stretch reads MALNVVILAA…AVEVEGANNR (226 aa). Residues 8 to 11, Lys-22, Gln-73, 78 to 79, 100 to 102, Gly-137, Glu-151, Asn-166, and Asn-224 contribute to the UDP-N-acetyl-alpha-D-glucosamine site; these read LAAG, GT, and YGD. Asp-102 is a Mg(2+) binding site. Asn-224 is a binding site for Mg(2+). A linker region spans residues 227–247; the sequence is VQLAQLERAYQARAAEKLMLE. Positions 248 to 454 are N-acetyltransferase; that stretch reads GANLRDPARI…GWARPVKKAK (207 aa). 2 residues coordinate UDP-N-acetyl-alpha-D-glucosamine: Arg-330 and Lys-348. The Proton acceptor role is filled by His-360. UDP-N-acetyl-alpha-D-glucosamine contacts are provided by Tyr-363 and Asn-374. Acetyl-CoA is bound by residues Ala-377, 383 to 384, Ser-402, Ala-420, and Arg-437; that span reads NY.

This sequence in the N-terminal section; belongs to the N-acetylglucosamine-1-phosphate uridyltransferase family. The protein in the C-terminal section; belongs to the transferase hexapeptide repeat family. As to quaternary structure, homotrimer. It depends on Mg(2+) as a cofactor.

Its subcellular location is the cytoplasm. It catalyses the reaction alpha-D-glucosamine 1-phosphate + acetyl-CoA = N-acetyl-alpha-D-glucosamine 1-phosphate + CoA + H(+). It carries out the reaction N-acetyl-alpha-D-glucosamine 1-phosphate + UTP + H(+) = UDP-N-acetyl-alpha-D-glucosamine + diphosphate. Its pathway is nucleotide-sugar biosynthesis; UDP-N-acetyl-alpha-D-glucosamine biosynthesis; N-acetyl-alpha-D-glucosamine 1-phosphate from alpha-D-glucosamine 6-phosphate (route II): step 2/2. The protein operates within nucleotide-sugar biosynthesis; UDP-N-acetyl-alpha-D-glucosamine biosynthesis; UDP-N-acetyl-alpha-D-glucosamine from N-acetyl-alpha-D-glucosamine 1-phosphate: step 1/1. It participates in bacterial outer membrane biogenesis; LPS lipid A biosynthesis. Its function is as follows. Catalyzes the last two sequential reactions in the de novo biosynthetic pathway for UDP-N-acetylglucosamine (UDP-GlcNAc). The C-terminal domain catalyzes the transfer of acetyl group from acetyl coenzyme A to glucosamine-1-phosphate (GlcN-1-P) to produce N-acetylglucosamine-1-phosphate (GlcNAc-1-P), which is converted into UDP-GlcNAc by the transfer of uridine 5-monophosphate (from uridine 5-triphosphate), a reaction catalyzed by the N-terminal domain. In Shewanella piezotolerans (strain WP3 / JCM 13877), this protein is Bifunctional protein GlmU.